Reading from the N-terminus, the 581-residue chain is AP2-like ethylene-responsive transcription factor AIL6 (581 aa).

Disordered regions lie at residues 105-132 (VRYS…HHNQ) and 205-240 (NNTN…TDSE). Low complexity-rich tracts occupy residues 108–122 (SDNS…SLTQ) and 218–232 (RGNN…NNNN). 2 consecutive DNA-binding regions (AP2/ERF) follow at residues 268-331 (IYRG…TNFP) and 367-425 (IYRG…TNFE).

This sequence belongs to the AP2/ERF transcription factor family. AP2 subfamily. Expressed in roots, seedlings, hypocotyl, inflorescence, siliques, and pistils. Also detected at low levels in leaves.

The protein resides in the nucleus. Probably acts as a transcriptional activator. Binds to the GCC-box pathogenesis-related promoter element. May be involved in the regulation of gene expression by stress factors and by components of stress signal transduction pathways. In Arabidopsis thaliana (Mouse-ear cress), this protein is AP2-like ethylene-responsive transcription factor AIL6.